The sequence spans 439 residues: L-tryptophan decarboxylase (439 aa).

Belongs to the phosphatidylserine decarboxylase family.

The catalysed reaction is L-tryptophan + H(+) = tryptamine + CO2. The protein operates within secondary metabolite biosynthesis. L-tryptophan decarboxylase; part of the gene cluster that mediates the biosynthesis of psilocybin, a psychotropic tryptamine-derived natural product. The first step in the pathway is the decarboxylation of L-tryptophan to tryptamine by the decarboxylase psiD. 4-hydroxy-L-tryptophan is accepted as substrate by psiD as well. The cytochrome P450 monooxygenase psiH then converts tryptamine to 4-hydroxytryptamine. The kinase psiK catalyzes the 4-O-phosphorylation step by converting 4-hydroxytryptamine into norbaeocystin. The methyltransferase psiM then catalyzes iterative methyl transfer to the amino group of norbaeocystin to yield psilocybin via a monomethylated intermediate, baeocystin. 4-hydroxy-6-methyl-l-tryptophancan also be converted the decarboxylase PsiD, kinase PsiK, and methyltransferase PsiM into respectively 6-methyl-norbaeocystin, 6-methylbaeocystin, and 6-methylpsilocybin. This is L-tryptophan decarboxylase from Psilocybe cubensis (Psychedelic mushroom).